Consider the following 381-residue polypeptide: MASASLISEPSFSAYWGGSGGFANQTVVDKVPPEMLYLVDPHWYQFPPMNPLWHGLLGFVIGVLGVISVIGNGMVIYIFSTTKSLRTPSNLLVVNLAFSDFLMMFTMSAPMGINCYYETWVLGPFMCELYALFGSLFGCGSIWTMTMIALDRYNVIVKGLSAKPMTNKTAMLRILFIWAFSVAWTIMPLFGWNRYVPEGNMTACGTDYLTKDWVSRSYILVYSFFVYLLPLGTIIYSYFFILQAVSAHEKQMREQRKKMNVASLRSAEASQTSAECKLAKVALMTISLWFFGWTPYLIINFTGIFETMKISPLLTIWGSLFAKANAVFNPIVYGISHPKYRAALEKKFPSLACASSSDDNTSVASGATTVSDEKSEKSASA.

Residues 1–53 (MASASLISEPSFSAYWGGSGGFANQTVVDKVPPEMLYLVDPHWYQFPPMNPLW) lie on the Extracellular side of the membrane. The N-linked (GlcNAc...) asparagine glycan is linked to asparagine 24. The chain crosses the membrane as a helical span at residues 54–78 (HGLLGFVIGVLGVISVIGNGMVIYI). At 79 to 90 (FSTTKSLRTPSN) the chain is on the cytoplasmic side. A helical membrane pass occupies residues 91–115 (LLVVNLAFSDFLMMFTMSAPMGINC). Residues 116–130 (YYETWVLGPFMCELY) lie on the Extracellular side of the membrane. Cysteine 127 and cysteine 204 are joined by a disulfide. Residues 131 to 150 (ALFGSLFGCGSIWTMTMIAL) form a helical membrane-spanning segment. Over 151–169 (DRYNVIVKGLSAKPMTNKT) the chain is Cytoplasmic. The helical transmembrane segment at 170-193 (AMLRILFIWAFSVAWTIMPLFGWN) threads the bilayer. Residues 194 to 217 (RYVPEGNMTACGTDYLTKDWVSRS) are Extracellular-facing. Asparagine 200 carries an N-linked (GlcNAc...) asparagine glycan. Residues 218-245 (YILVYSFFVYLLPLGTIIYSYFFILQAV) form a helical membrane-spanning segment. The Cytoplasmic segment spans residues 246–280 (SAHEKQMREQRKKMNVASLRSAEASQTSAECKLAK). Residues 281 to 304 (VALMTISLWFFGWTPYLIINFTGI) traverse the membrane as a helical segment. The Extracellular segment spans residues 305-311 (FETMKIS). Residues 312–336 (PLLTIWGSLFAKANAVFNPIVYGIS) traverse the membrane as a helical segment. The residue at position 323 (lysine 323) is an N6-(retinylidene)lysine. Topologically, residues 337-381 (HPKYRAALEKKFPSLACASSSDDNTSVASGATTVSDEKSEKSASA) are cytoplasmic. Polar residues predominate over residues 354–370 (ASSSDDNTSVASGATTV). A disordered region spans residues 354-381 (ASSSDDNTSVASGATTVSDEKSEKSASA). Positions 371–381 (SDEKSEKSASA) are enriched in basic and acidic residues.

The protein belongs to the G-protein coupled receptor 1 family. Opsin subfamily. Phosphorylated on some or all of the serine and threonine residues present in the C-terminal region.

The protein localises to the cell projection. Its subcellular location is the rhabdomere membrane. In terms of biological role, visual pigments are the light-absorbing molecules that mediate vision. They consist of an apoprotein, opsin, covalently linked to cis-retinal. This Schistocerca gregaria (Desert locust) protein is Opsin-1 (Lo1).